We begin with the raw amino-acid sequence, 115 residues long: Tyrosine-protein phosphatase 19 (115 aa).

One can recognise a Tyrosine-protein phosphatase domain in the interval 1-115 (WLMIVEQKCR…ETGSDAPMVV (115 aa)). Aspartate 83 serves as a coordination point for substrate.

This sequence belongs to the protein-tyrosine phosphatase family.

The enzyme catalyses O-phospho-L-tyrosyl-[protein] + H2O = L-tyrosyl-[protein] + phosphate. The polypeptide is Tyrosine-protein phosphatase 19 (STY-19) (Styela plicata (Wrinkled sea squirt)).